Reading from the N-terminus, the 126-residue chain is Aspartate 1-decarboxylase (126 aa).

Serine 25 serves as the catalytic Schiff-base intermediate with substrate; via pyruvic acid. Position 25 is a pyruvic acid (Ser) (serine 25). Threonine 57 is a binding site for substrate. Tyrosine 58 serves as the catalytic Proton donor. Substrate is bound at residue glycine 73–alanine 75.

It belongs to the PanD family. Heterooctamer of four alpha and four beta subunits. Requires pyruvate as cofactor. In terms of processing, is synthesized initially as an inactive proenzyme, which is activated by self-cleavage at a specific serine bond to produce a beta-subunit with a hydroxyl group at its C-terminus and an alpha-subunit with a pyruvoyl group at its N-terminus.

It localises to the cytoplasm. It carries out the reaction L-aspartate + H(+) = beta-alanine + CO2. The protein operates within cofactor biosynthesis; (R)-pantothenate biosynthesis; beta-alanine from L-aspartate: step 1/1. Its function is as follows. Catalyzes the pyruvoyl-dependent decarboxylation of aspartate to produce beta-alanine. This chain is Aspartate 1-decarboxylase, found in Salmonella choleraesuis (strain SC-B67).